A 166-amino-acid polypeptide reads, in one-letter code: Large ribosomal subunit protein uL10 (166 aa).

This sequence belongs to the universal ribosomal protein uL10 family. In terms of assembly, part of the ribosomal stalk of the 50S ribosomal subunit. The N-terminus interacts with L11 and the large rRNA to form the base of the stalk. The C-terminus forms an elongated spine to which L12 dimers bind in a sequential fashion forming a multimeric L10(L12)X complex.

In terms of biological role, forms part of the ribosomal stalk, playing a central role in the interaction of the ribosome with GTP-bound translation factors. The chain is Large ribosomal subunit protein uL10 from Bacillus cereus (strain G9842).